The chain runs to 593 residues: Chromosomal replication initiator protein DnaA (593 aa).

The tract at residues 1–71 (MSDPCWEQCV…EIISNSDAGP (71 aa)) is domain I, interacts with DnaA modulators. The interval 71 to 256 (PKSLEIAVAQ…DVEGGIQHKH (186 aa)) is domain II. A disordered region spans residues 97 to 186 (AVPVPDPLPS…STESSADRER (90 aa)). Polar residues predominate over residues 113–124 (SFQPPKGNTSAD). Residues 257–473 (NLNTTFIFDN…GALKRVIANA (217 aa)) are domain III, AAA+ region. ATP contacts are provided by G301, G303, K304, and T305. The interval 474–593 (QFTQRSISVE…VKNLLRTLTT (120 aa)) is domain IV, binds dsDNA.

The protein belongs to the DnaA family. In terms of assembly, oligomerizes as a right-handed, spiral filament on DNA at oriC.

It is found in the cytoplasm. In terms of biological role, plays an essential role in the initiation and regulation of chromosomal replication. ATP-DnaA binds to the origin of replication (oriC) to initiate formation of the DNA replication initiation complex once per cell cycle. Binds the DnaA box (a 9 base pair repeat at the origin) and separates the double-stranded (ds)DNA. Forms a right-handed helical filament on oriC DNA; dsDNA binds to the exterior of the filament while single-stranded (ss)DNA is stabiized in the filament's interior. The ATP-DnaA-oriC complex binds and stabilizes one strand of the AT-rich DNA unwinding element (DUE), permitting loading of DNA polymerase. After initiation quickly degrades to an ADP-DnaA complex that is not apt for DNA replication. Binds acidic phospholipids. This Teredinibacter turnerae (strain ATCC 39867 / T7901) protein is Chromosomal replication initiator protein DnaA.